Reading from the N-terminus, the 95-residue chain is Aspartyl/glutamyl-tRNA(Asn/Gln) amidotransferase subunit C (95 aa).

The protein belongs to the GatC family. In terms of assembly, heterotrimer of A, B and C subunits.

The catalysed reaction is L-glutamyl-tRNA(Gln) + L-glutamine + ATP + H2O = L-glutaminyl-tRNA(Gln) + L-glutamate + ADP + phosphate + H(+). The enzyme catalyses L-aspartyl-tRNA(Asn) + L-glutamine + ATP + H2O = L-asparaginyl-tRNA(Asn) + L-glutamate + ADP + phosphate + 2 H(+). Functionally, allows the formation of correctly charged Asn-tRNA(Asn) or Gln-tRNA(Gln) through the transamidation of misacylated Asp-tRNA(Asn) or Glu-tRNA(Gln) in organisms which lack either or both of asparaginyl-tRNA or glutaminyl-tRNA synthetases. The reaction takes place in the presence of glutamine and ATP through an activated phospho-Asp-tRNA(Asn) or phospho-Glu-tRNA(Gln). The protein is Aspartyl/glutamyl-tRNA(Asn/Gln) amidotransferase subunit C of Citrifermentans bemidjiense (strain ATCC BAA-1014 / DSM 16622 / JCM 12645 / Bem) (Geobacter bemidjiensis).